A 3388-amino-acid chain; its full sequence is Genome polyprotein (3388 aa).

An interaction with host EXOC1 region spans residues Met-1–Met-15. Residues Met-1 to Thr-101 are Cytoplasmic-facing. The interval Met-37–Ile-72 is hydrophobic; homodimerization of capsid protein C. The propeptide at Thr-101 to Ala-114 is ER anchor for the capsid protein C, removed in mature form by serine protease NS3. The chain crosses the membrane as a helical span at residues Ala-102–Gly-122. Over Glu-123–Glu-238 the chain is Extracellular. Asn-183 carries N-linked (GlcNAc...) asparagine; by host glycosylation. Residues Thr-239–Gly-259 form a helical membrane-spanning segment. Topologically, residues Thr-260–Arg-265 are cytoplasmic. The chain crosses the membrane as a helical span at residues Val-266–Thr-280. At Met-281–Gly-725 the chain is on the extracellular side. 4 disulfides stabilise this stretch: Cys-283–Cys-310, Cys-340–Cys-401, Cys-354–Cys-385, and Cys-372–Cys-396. Asn-347 carries an N-linked (GlcNAc...) asparagine; by host glycan. Positions Asp-378–Gly-391 are fusion peptide. A glycan (N-linked (GlcNAc...) asparagine; by host) is linked at Asn-433. 2 disulfides stabilise this stretch: Cys-465–Cys-565 and Cys-582–Cys-613. The helical transmembrane segment at Ala-726–Ile-746 threads the bilayer. Residues Gly-747–Ser-752 are Cytoplasmic-facing. The helical transmembrane segment at Thr-753–Val-773 threads the bilayer. The Extracellular segment spans residues Gln-774–Ile-1195. Disulfide bonds link Cys-779-Cys-790, Cys-830-Cys-918, Cys-954-Cys-998, Cys-1055-Cys-1104, Cys-1066-Cys-1088, and Cys-1087-Cys-1091. N-linked (GlcNAc...) asparagine; by host glycosylation is found at Asn-905 and Asn-982. A glycan (N-linked (GlcNAc...) asparagine; by host) is linked at Asn-1134. The helical transmembrane segment at Gly-1196–Leu-1220 threads the bilayer. Residues Arg-1221 to Lys-1226 lie on the Cytoplasmic side of the membrane. The chain crosses the membrane as a helical span at residues Glu-1227 to Glu-1245. Residues Thr-1246–Lys-1269 are Lumenal-facing. The chain crosses the membrane as a helical span at residues Tyr-1270–Asn-1290. Position 1291 (Ala-1291) is a topological domain, cytoplasmic. A helical membrane pass occupies residues Trp-1292–Thr-1310. Residues Ser-1311–Asp-1317 are Lumenal-facing. The helical transmembrane segment at Trp-1318–Leu-1338 threads the bilayer. Over Ser-1339–Ser-1346 the chain is Cytoplasmic. Residues Trp-1347–Leu-1367 form a helical membrane-spanning segment. Residues Lys-1368–Asp-1370 are Lumenal-facing. The chain crosses the membrane as a helical span at residues Thr-1371 to Gly-1391. Topologically, residues Arg-1392 to Gly-1447 are cytoplasmic. Positions Leu-1398–Glu-1437 are interacts with and activates NS3 protease. The segment at residues Leu-1448–Leu-1468 is an intramembrane region (helical). Topologically, residues Trp-1469–Thr-2144 are cytoplasmic. Residues Ala-1476–Ile-1653 enclose the Peptidase S7 domain. Residues His-1526, Asp-1550, and Ser-1610 each act as charge relay system; for serine protease NS3 activity in the active site. Residues Asp-1655 to Glu-1811 form the Helicase ATP-binding domain. The interval Arg-1659–Arg-1662 is important for RNA-binding. Leu-1668–Thr-1675 provides a ligand contact to ATP. Positions Asp-1759–His-1762 match the DEAH box motif. Residues Ser-1821–Arg-1988 form the Helicase C-terminal domain. N6-acetyllysine; by host is present on Lys-1863. The helical transmembrane segment at Leu-2145–Gly-2165 threads the bilayer. Over Arg-2166 to Gly-2167 the chain is Lumenal. An intramembrane region (helical) is located at residues Ile-2168–Ala-2188. Gln-2189 is a topological domain (lumenal). Residues Ile-2190–Ile-2210 traverse the membrane as a helical segment. Topologically, residues Pro-2211–Thr-2225 are cytoplasmic. The chain crosses the membrane as a helical span at residues Tyr-2226–Leu-2246. The Lumenal portion of the chain corresponds to Glu-2247 to Asp-2271. Positions Leu-2272–Leu-2292 form an intramembrane region, helical. The Lumenal portion of the chain corresponds to Arg-2293–Thr-2313. N-linked (GlcNAc...) asparagine; by host glycosylation is found at Asn-2298 and Asn-2302. The segment at residues Val-2314–Leu-2334 is an intramembrane region (helical). Topologically, residues Ala-2335–Pro-2344 are lumenal. A helical transmembrane segment spans residues Ile-2345–Leu-2365. Residues Gln-2366–Gln-2410 lie on the Cytoplasmic side of the membrane. Residues Val-2411–Cys-2431 form a helical membrane-spanning segment. The Lumenal portion of the chain corresponds to Glu-2432–Thr-2456. A glycan (N-linked (GlcNAc...) asparagine; by host) is linked at Asn-2454. A helical membrane pass occupies residues Ile-2457 to Phe-2477. Residues Ser-2478–Trp-3388 are Cytoplasmic-facing. In terms of domain architecture, mRNA cap 0-1 NS5-type MT spans Thr-2490–Asn-2752. Position 2544 (Ser-2544) interacts with S-adenosyl-L-methionine. Phosphoserine is present on Ser-2544. Catalysis depends on Lys-2549, which acts as the For 2'-O-MTase activity. The SUMO-interacting motif motif lies at Val-2565–Leu-2568. Positions 2574, 2575, 2592, 2593, 2619, and 2620 each coordinate S-adenosyl-L-methionine. Asp-2634 serves as the catalytic For 2'-O-MTase activity. Position 2635 (Ile-2635) interacts with S-adenosyl-L-methionine. Active-site for 2'-O-MTase activity residues include Lys-2669 and Glu-2705. Residue Tyr-2707 coordinates S-adenosyl-L-methionine. Residues Glu-2926, His-2930, Cys-2935, and Cys-2938 each coordinate Zn(2+). Residues Ala-3017 to Leu-3166 form the RdRp catalytic domain. His-3200, Cys-3216, and Cys-3335 together coordinate Zn(2+).

It in the N-terminal section; belongs to the class I-like SAM-binding methyltransferase superfamily. mRNA cap 0-1 NS5-type methyltransferase family. Homodimer. Interacts (via N-terminus) with host EXOC1 (via C-terminus); this interaction results in EXOC1 degradation through the proteasome degradation pathway. In terms of assembly, forms heterodimers with envelope protein E in the endoplasmic reticulum and Golgi. As to quaternary structure, homodimer; in the endoplasmic reticulum and Golgi. Interacts with protein prM. Interacts with non-structural protein 1. Homodimer; Homohexamer when secreted. Interacts with envelope protein E. Interacts with host PRKAA1. In terms of assembly, interacts (via N-terminus) with serine protease NS3. As to quaternary structure, forms a heterodimer with serine protease NS3. May form homooligomers. Forms a heterodimer with NS2B. Interacts with NS4B. Interacts with unphosphorylated RNA-directed RNA polymerase NS5; this interaction stimulates RNA-directed RNA polymerase NS5 guanylyltransferase activity. Interacts with host SHFL. In terms of assembly, interacts with host MAVS; this interaction inhibits the synthesis of IFN-beta. Interacts with host SHFL. Interacts with host AUP1; the interaction occurs in the presence of Dengue virus NS4B and induces lipophagy which facilitates production of virus progeny particles. May interact with host SRPRA and SEC61G. As to quaternary structure, interacts with serine protease NS3. Homodimer. Interacts with host STAT2; this interaction inhibits the phosphorylation of the latter, and, when all viral proteins are present (polyprotein), targets STAT2 for degradation. Interacts with serine protease NS3. Interacts with host PAF1 complex; the interaction may prevent the recruitment of the PAF1 complex to interferon-responsive genes, and thus reduces the immune response. In terms of processing, specific enzymatic cleavages in vivo yield mature proteins. Cleavages in the lumen of endoplasmic reticulum are performed by host signal peptidase, whereas cleavages in the cytoplasmic side are performed by serine protease NS3. Signal cleavage at the 2K-4B site requires a prior NS3 protease-mediated cleavage at the 4A-2K site. Cleaved in post-Golgi vesicles by a host furin, releasing the mature small envelope protein M, and peptide pr. This cleavage is incomplete as up to 30% of viral particles still carry uncleaved prM. Post-translationally, N-glycosylated. In terms of processing, N-glycosylated. The excreted form is glycosylated and this is required for efficient secretion of the protein from infected cells. Acetylated by host KAT5. Acetylation modulates NS3 RNA-binding and unwinding activities and plays an important positive role for viral replication. Post-translationally, sumoylation of RNA-directed RNA polymerase NS5 increases NS5 protein stability allowing proper viral RNA replication. In terms of processing, phosphorylated on serines residues. This phosphorylation may trigger NS5 nuclear localization.

It is found in the virion. Its subcellular location is the host nucleus. The protein localises to the host cytoplasm. The protein resides in the host perinuclear region. It localises to the secreted. It is found in the virion membrane. Its subcellular location is the host endoplasmic reticulum membrane. The protein localises to the host mitochondrion. It catalyses the reaction Selective hydrolysis of -Xaa-Xaa-|-Yaa- bonds in which each of the Xaa can be either Arg or Lys and Yaa can be either Ser or Ala.. It carries out the reaction RNA(n) + a ribonucleoside 5'-triphosphate = RNA(n+1) + diphosphate. The catalysed reaction is a ribonucleoside 5'-triphosphate + H2O = a ribonucleoside 5'-diphosphate + phosphate + H(+). The enzyme catalyses ATP + H2O = ADP + phosphate + H(+). It catalyses the reaction a 5'-end (5'-triphosphoguanosine)-ribonucleoside in mRNA + S-adenosyl-L-methionine = a 5'-end (N(7)-methyl 5'-triphosphoguanosine)-ribonucleoside in mRNA + S-adenosyl-L-homocysteine. It carries out the reaction a 5'-end (N(7)-methyl 5'-triphosphoguanosine)-ribonucleoside in mRNA + S-adenosyl-L-methionine = a 5'-end (N(7)-methyl 5'-triphosphoguanosine)-(2'-O-methyl-ribonucleoside) in mRNA + S-adenosyl-L-homocysteine + H(+). Plays a role in virus budding by binding to the cell membrane and gathering the viral RNA into a nucleocapsid that forms the core of a mature virus particle. During virus entry, may induce genome penetration into the host cytoplasm after hemifusion induced by the surface proteins. Can migrate to the cell nucleus where it modulates host functions. Overcomes the anti-viral effects of host EXOC1 by sequestering and degrading the latter through the proteasome degradation pathway. Its function is as follows. Inhibits RNA silencing by interfering with host Dicer. In terms of biological role, prevents premature fusion activity of envelope proteins in trans-Golgi by binding to envelope protein E at pH6.0. After virion release in extracellular space, gets dissociated from E dimers. Functionally, acts as a chaperone for envelope protein E during intracellular virion assembly by masking and inactivating envelope protein E fusion peptide. prM is the only viral peptide matured by host furin in the trans-Golgi network probably to avoid catastrophic activation of the viral fusion activity in acidic Golgi compartment prior to virion release. prM-E cleavage is inefficient, and many virions are only partially matured. These uncleaved prM would play a role in immune evasion. May play a role in virus budding. Exerts cytotoxic effects by activating a mitochondrial apoptotic pathway through M ectodomain. May display a viroporin activity. Its function is as follows. Binds to host cell surface receptor and mediates fusion between viral and cellular membranes. Envelope protein is synthesized in the endoplasmic reticulum in the form of heterodimer with protein prM. They play a role in virion budding in the ER, and the newly formed immature particle is covered with 60 spikes composed of heterodimer between precursor prM and envelope protein E. The virion is transported to the Golgi apparatus where the low pH causes dissociation of PrM-E heterodimers and formation of E homodimers. prM-E cleavage is inefficient, and many virions are only partially matured. These uncleaved prM would play a role in immune evasion. In terms of biological role, involved in immune evasion, pathogenesis and viral replication. Once cleaved off the polyprotein, is targeted to three destinations: the viral replication cycle, the plasma membrane and the extracellular compartment. Essential for viral replication. Required for formation of the replication complex and recruitment of other non-structural proteins to the ER-derived membrane structures. Excreted as a hexameric lipoparticle that plays a role against host immune response. Antagonizing the complement function. Binds to the host macrophages and dendritic cells. Inhibits signal transduction originating from Toll-like receptor 3 (TLR3). Mediates complement activation, which may contribute to the pathogenesis of the vascular leakage that occurs in severe dengue disease. Activates autophagy through the AMPK/ERK/mTOR signaling pathway. Mechanistically, acts as the assembly platform for STK11-AMPK interactions and promotes STK11-AMPK interactions. In turn, promotes phosphorylation of the AMPK kinase structural domain and activates AMPK, thereby positively regulating the AMPK/ERK/mTOR signaling pathway and inducing autophagy. Functionally, disrupts the host endothelial glycocalyx layer of host pulmonary microvascular endothelial cells, inducing degradation of sialic acid and shedding of heparan sulfate proteoglycans. NS1 induces expression of sialidases, heparanase, and activates cathepsin L, which activates heparanase via enzymatic cleavage. These effects are probably linked to the endothelial hyperpermeability observed in severe dengue disease. Component of the viral RNA replication complex that functions in virion assembly and antagonizes the host immune response. Its function is as follows. Required cofactor for the serine protease function of NS3. May have membrane-destabilizing activity and form viroporins. In terms of biological role, displays three enzymatic activities: serine protease, NTPase and RNA helicase. NS3 serine protease, in association with NS2B, performs its autocleavage and cleaves the polyprotein at dibasic sites in the cytoplasm: C-prM, NS2A-NS2B, NS2B-NS3, NS3-NS4A, NS4A-2K and NS4B-NS5. NS3 RNA helicase binds RNA and unwinds dsRNA in the 3' to 5' direction. Functionally, regulates the ATPase activity of the NS3 helicase activity. NS4A allows NS3 helicase to conserve energy during unwinding. Plays a role in the inhibition of the host innate immune response. Interacts with host MAVS and thereby prevents the interaction between RIGI and MAVS. In turn, IFN-beta production is impaired. Interacts with host AUP1 which mediates induction of lipophagy in host cells and facilitates production of virus progeny particles. Functions as a signal peptide for NS4B and is required for the interferon antagonism activity of the latter. Its function is as follows. Induces the formation of ER-derived membrane vesicles where the viral replication takes place. Inhibits interferon (IFN)-induced host STAT1 phosphorylation and nuclear translocation, thereby preventing the establishment of cellular antiviral state by blocking the IFN-alpha/beta pathway. In terms of biological role, replicates the viral (+) and (-) RNA genome, and performs the capping of genomes in the cytoplasm. NS5 methylates viral RNA cap at guanine N-7 and ribose 2'-O positions. Besides its role in RNA genome replication, also prevents the establishment of cellular antiviral state by blocking the interferon-alpha/beta (IFN-alpha/beta) signaling pathway. Inhibits host TYK2 and STAT2 phosphorylation, thereby preventing activation of JAK-STAT signaling pathway. May reduce immune responses by preventing the recruitment of the host PAF1 complex to interferon-responsive genes. This is Genome polyprotein from Aedimorphus (Red guenon).